The primary structure comprises 121 residues: UPF0344 protein BCG9842_B4136 (121 aa).

4 helical membrane passes run isoleucine 6–glycine 26, leucine 38–alanine 58, tryptophan 65–valine 85, and proline 92–leucine 112.

Belongs to the UPF0344 family.

It is found in the cell membrane. The protein is UPF0344 protein BCG9842_B4136 of Bacillus cereus (strain G9842).